A 406-amino-acid chain; its full sequence is Tyrosine--tRNA ligase (406 aa).

L-tyrosine is bound at residue Tyr35. The 'HIGH' region motif lies at 40–49; that stretch reads PTADSLHVGH. L-tyrosine is bound by residues Tyr168 and Gln172. A 'KMSKS' region motif is present at residues 228–232; sequence KMGKT. Lys231 is an ATP binding site. An S4 RNA-binding domain is found at 340-404; that stretch reads SELLDILVEA…RGKKNYNKIV (65 aa).

Belongs to the class-I aminoacyl-tRNA synthetase family. TyrS type 1 subfamily. Homodimer.

The protein localises to the cytoplasm. It carries out the reaction tRNA(Tyr) + L-tyrosine + ATP = L-tyrosyl-tRNA(Tyr) + AMP + diphosphate + H(+). Functionally, catalyzes the attachment of tyrosine to tRNA(Tyr) in a two-step reaction: tyrosine is first activated by ATP to form Tyr-AMP and then transferred to the acceptor end of tRNA(Tyr). The protein is Tyrosine--tRNA ligase of Clostridium perfringens (strain SM101 / Type A).